The following is a 163-amino-acid chain: uncharacterized protein (163 aa).

A helical membrane pass occupies residues 11 to 31 (LSWFLLLVVVILIFFLLLSCL).

Its subcellular location is the membrane. This is an uncharacterized protein from Saccharomyces cerevisiae (strain ATCC 204508 / S288c) (Baker's yeast).